Consider the following 192-residue polypeptide: Elongation factor P (192 aa).

This sequence belongs to the elongation factor P family.

The protein localises to the cytoplasm. It participates in protein biosynthesis; polypeptide chain elongation. Its function is as follows. Involved in peptide bond synthesis. Stimulates efficient translation and peptide-bond synthesis on native or reconstituted 70S ribosomes in vitro. Probably functions indirectly by altering the affinity of the ribosome for aminoacyl-tRNA, thus increasing their reactivity as acceptors for peptidyl transferase. The sequence is that of Elongation factor P from Borreliella afzelii (strain PKo) (Borrelia afzelii).